The primary structure comprises 493 residues: Glutamate--tRNA ligase (493 aa).

Residues 10 to 20 (PSPTGDPHVGT) carry the 'HIGH' region motif. The 'KMSKS' region motif lies at 251–255 (KLSKR). Position 254 (Lys-254) interacts with ATP.

It belongs to the class-I aminoacyl-tRNA synthetase family. Glutamate--tRNA ligase type 1 subfamily. In terms of assembly, monomer.

It is found in the cytoplasm. It carries out the reaction tRNA(Glu) + L-glutamate + ATP = L-glutamyl-tRNA(Glu) + AMP + diphosphate. Its function is as follows. Catalyzes the attachment of glutamate to tRNA(Glu) in a two-step reaction: glutamate is first activated by ATP to form Glu-AMP and then transferred to the acceptor end of tRNA(Glu). The protein is Glutamate--tRNA ligase of Pseudomonas fluorescens (strain Pf0-1).